The following is a 394-amino-acid chain: Ribulose bisphosphate carboxylase large chain (394 aa).

At Lys5 the chain carries N6,N6,N6-trimethyllysine. Substrate-binding residues include Asn114 and Thr164. The Proton acceptor role is filled by Lys166. Position 168 (Lys168) interacts with substrate. Residues Lys192, Asp194, and Glu195 each coordinate Mg(2+). An N6-carboxylysine modification is found at Lys192. His285 functions as the Proton acceptor in the catalytic mechanism. 3 residues coordinate substrate: Arg286, His318, and Ser370.

It belongs to the RuBisCO large chain family. Type I subfamily. Heterohexadecamer of 8 large chains and 8 small chains. It depends on Mg(2+) as a cofactor.

It is found in the plastid. The protein localises to the chloroplast. The enzyme catalyses 2 (2R)-3-phosphoglycerate + 2 H(+) = D-ribulose 1,5-bisphosphate + CO2 + H2O. It carries out the reaction D-ribulose 1,5-bisphosphate + O2 = 2-phosphoglycolate + (2R)-3-phosphoglycerate + 2 H(+). RuBisCO catalyzes two reactions: the carboxylation of D-ribulose 1,5-bisphosphate, the primary event in carbon dioxide fixation, as well as the oxidative fragmentation of the pentose substrate in the photorespiration process. Both reactions occur simultaneously and in competition at the same active site. The protein is Ribulose bisphosphate carboxylase large chain (rbcL) of Barclaya longifolia (Orchid lily).